The chain runs to 639 residues: Splicing factor 1 (639 aa).

Disordered regions lie at residues 1–42 and 65–94; these read MATG…VIPP and LRTGDLGIPPNPEDRSPSPEPIYNSEGKRL. Residue A2 is modified to N-acetylalanine. At S14 the chain carries Phosphoserine. A Nuclear localization signal motif is present at residues 15 to 19; sequence KKRKR. The residue at position 20 (S20) is a Phosphoserine; by PKG. A phosphoserine mark is found at S80 and S82. Position 87 is a phosphotyrosine (Y87). S89 bears the Phosphoserine mark. A KH domain is found at 141-222; it reads MIPQDEYPEI…ENVKKAVEQI (82 aa). The CCHC-type zinc finger occupies 277–296; that stretch reads TVCTKCGGAGHIASDCKFQR. The tract at residues 325–639 is disordered; it reads VPASVGSTSG…PAPPPPPPQN (315 aa). Positions 335 to 350 are enriched in low complexity; the sequence is PATTPLASAPRPAAPA. Gly residues predominate over residues 382–394; it reads MHGGGPGGPGGGP. A compositionally biased stretch (pro residues) spans 418–447; that stretch reads NGPPPPWMQPPPPPMNQGPHPPGHHGPPPM. The residue at position 463 (L463) is a Phosphoserine. K467 carries the post-translational modification Omega-N-methylarginine. Residues 470–499 are compositionally biased toward pro residues; sequence MPPPPMGMMPPPPPPPSGQPPPPPSGPLPP. Composition is skewed to low complexity over residues 515–534 and 542–566; these read SSMASSTPLPWQQNTTTTTT and PPWQQQQAAAAASPGAPQMQGNPTM. Composition is skewed to pro residues over residues 567 to 591 and 598 to 608; these read VPLPPGVQPPLPPGAPPPPPPPPPG and APPPPPPPPMD. The span at 615–625 shows a compositional bias: low complexity; the sequence is MMGMGVAGMPP. A compositionally biased stretch (pro residues) spans 626-639; the sequence is FGMPPAPPPPPPQN.

This sequence belongs to the BBP/SF1 family. In terms of assembly, binds U2AF2. Interacts with U1 snRNA. Binds EWSR1, FUS and TAF15. Interacts with RBM17. Post-translationally, phosphorylation on Ser-20 interferes with U2AF2 binding and spliceosome assembly. Isoform 6 is phosphorylated on Ser-463. As to expression, detected in lung, ovary, adrenal gland, colon, kidney, muscle, pancreas, thyroid, placenta, brain, liver and heart.

Its subcellular location is the nucleus. Functionally, necessary for the ATP-dependent first step of spliceosome assembly. Binds to the intron branch point sequence (BPS) 5'-UACUAAC-3' of the pre-mRNA. May act as transcription repressor. The protein is Splicing factor 1 (SF1) of Homo sapiens (Human).